A 239-amino-acid polypeptide reads, in one-letter code: 7-cyano-7-deazaguanine synthase (239 aa).

ATP is bound at residue 12–22 (FSGGQDSATCL). The Zn(2+) site is built by cysteine 200, cysteine 215, cysteine 218, and cysteine 221.

This sequence belongs to the QueC family. Requires Zn(2+) as cofactor.

The catalysed reaction is 7-carboxy-7-deazaguanine + NH4(+) + ATP = 7-cyano-7-deazaguanine + ADP + phosphate + H2O + H(+). Its pathway is purine metabolism; 7-cyano-7-deazaguanine biosynthesis. Its function is as follows. Catalyzes the ATP-dependent conversion of 7-carboxy-7-deazaguanine (CDG) to 7-cyano-7-deazaguanine (preQ(0)). The protein is 7-cyano-7-deazaguanine synthase of Hyphomonas neptunium (strain ATCC 15444).